Consider the following 149-residue polypeptide: Large ribosomal subunit protein bL9 (149 aa).

This sequence belongs to the bacterial ribosomal protein bL9 family.

Functionally, binds to the 23S rRNA. The polypeptide is Large ribosomal subunit protein bL9 (Acidothermus cellulolyticus (strain ATCC 43068 / DSM 8971 / 11B)).